We begin with the raw amino-acid sequence, 956 residues long: Translation initiation factor IF-2 (956 aa).

Disordered regions lie at residues 53 to 102, 116 to 315, and 334 to 371; these read QFAG…QQEI, GKID…NRPA, and TLEK…ALDE. Residues 58–102 are compositionally biased toward basic and acidic residues; sequence KGNKEASKEVGEEKRKEKEALRVEREKEIEDKRRQEEERQKQQEI. Positions 142–158 are enriched in polar residues; that stretch reads VTPTQTEKPVQKETVQS. The span at 166–186 shows a compositional bias: basic and acidic residues; it reads SEEKKVEKPIITEKKEVKAES. A compositionally biased stretch (low complexity) spans 197–208; the sequence is TDPTTAEETITT. The span at 209 to 229 shows a compositional bias: polar residues; the sequence is QYQKLSGTTLTGQTIDLSQFN. A compositionally biased stretch (low complexity) spans 240 to 257; sequence ITPNKPGTPGVGNNNNAN. Over residues 343-352 the composition is skewed to basic residues; it reads GKSKAAKYRR. The span at 353–371 shows a compositional bias: basic and acidic residues; it reads DKRETHRQKSDDEQRALDE. A tr-type G domain is found at 454–622; the sequence is TRAPIVTVMG…KVLLEAEILD (169 aa). Positions 463–470 are G1; that stretch reads GHVDHGKT. 463-470 lines the GTP pocket; sequence GHVDHGKT. Residues 488–492 form a G2 region; sequence GITQH. The G3 stretch occupies residues 510–513; sequence DTPG. Residues 510–514 and 564–567 contribute to the GTP site; these read DTPGH and NKVD. Positions 564 to 567 are G4; sequence NKVD. Residues 600–602 are G5; the sequence is SAK.

Belongs to the TRAFAC class translation factor GTPase superfamily. Classic translation factor GTPase family. IF-2 subfamily.

The protein localises to the cytoplasm. Functionally, one of the essential components for the initiation of protein synthesis. Protects formylmethionyl-tRNA from spontaneous hydrolysis and promotes its binding to the 30S ribosomal subunits. Also involved in the hydrolysis of GTP during the formation of the 70S ribosomal complex. The polypeptide is Translation initiation factor IF-2 (Flavobacterium johnsoniae (strain ATCC 17061 / DSM 2064 / JCM 8514 / BCRC 14874 / CCUG 350202 / NBRC 14942 / NCIMB 11054 / UW101) (Cytophaga johnsonae)).